The primary structure comprises 246 residues: 1-(5-phosphoribosyl)-5-[(5-phosphoribosylamino)methylideneamino] imidazole-4-carboxamide isomerase (246 aa).

The active-site Proton acceptor is Asp10. Catalysis depends on Asp135, which acts as the Proton donor.

Belongs to the HisA/HisF family.

The protein resides in the cytoplasm. The catalysed reaction is 1-(5-phospho-beta-D-ribosyl)-5-[(5-phospho-beta-D-ribosylamino)methylideneamino]imidazole-4-carboxamide = 5-[(5-phospho-1-deoxy-D-ribulos-1-ylimino)methylamino]-1-(5-phospho-beta-D-ribosyl)imidazole-4-carboxamide. It participates in amino-acid biosynthesis; L-histidine biosynthesis; L-histidine from 5-phospho-alpha-D-ribose 1-diphosphate: step 4/9. This Methanococcoides burtonii (strain DSM 6242 / NBRC 107633 / OCM 468 / ACE-M) protein is 1-(5-phosphoribosyl)-5-[(5-phosphoribosylamino)methylideneamino] imidazole-4-carboxamide isomerase.